The following is a 244-amino-acid chain: Small ribosomal subunit protein eS4 (244 aa).

Residues 43 to 106 (LPLLLVVRDI…DENYLVLFDE (64 aa)) enclose the S4 RNA-binding domain.

Belongs to the eukaryotic ribosomal protein eS4 family.

The protein is Small ribosomal subunit protein eS4 of Methanococcus maripaludis (strain C6 / ATCC BAA-1332).